The primary structure comprises 332 residues: UDP-N-acetylenolpyruvoylglucosamine reductase (332 aa).

The 167-residue stretch at 55-221 folds into the FAD-binding PCMH-type domain; it reads VGGAADLYVA…TQATLQLAPG (167 aa). The active site involves R200. S251 (proton donor) is an active-site residue. E321 is an active-site residue.

It belongs to the MurB family. Requires FAD as cofactor.

The protein resides in the cytoplasm. The enzyme catalyses UDP-N-acetyl-alpha-D-muramate + NADP(+) = UDP-N-acetyl-3-O-(1-carboxyvinyl)-alpha-D-glucosamine + NADPH + H(+). It functions in the pathway cell wall biogenesis; peptidoglycan biosynthesis. In terms of biological role, cell wall formation. This chain is UDP-N-acetylenolpyruvoylglucosamine reductase, found in Nostoc punctiforme (strain ATCC 29133 / PCC 73102).